The primary structure comprises 997 residues: Signal peptide, CUB and EGF-like domain-containing protein 2 (997 aa).

A signal peptide spans methionine 1–alanine 28. The region spanning aspartate 43 to glutamate 83 is the EGF-like 1; calcium-binding domain. 8 disulfides stabilise this stretch: cysteine 47-cysteine 60, cysteine 54-cysteine 69, cysteine 71-cysteine 82, cysteine 88-cysteine 100, cysteine 96-cysteine 109, cysteine 111-cysteine 124, cysteine 130-cysteine 141, and cysteine 137-cysteine 150. The EGF-like 2; calcium-binding domain maps to aspartate 84–leucine 125. The EGF-like 3; calcium-binding domain occupies aspartate 126–glutamine 162. EGF-like domains are found at residues cysteine 175–cysteine 211, cysteine 215–cysteine 250, and cysteine 284–cysteine 319. The 41-residue stretch at aspartate 321–glutamine 361 folds into the EGF-like 7; calcium-binding domain. 9 disulfides stabilise this stretch: cysteine 325/cysteine 336, cysteine 332/cysteine 345, cysteine 347/cysteine 360, cysteine 366/cysteine 376, cysteine 372/cysteine 385, cysteine 387/cysteine 399, cysteine 405/cysteine 416, cysteine 412/cysteine 425, and cysteine 427/cysteine 440. Residues aspartate 362 to glycine 400 enclose the EGF-like 8; calcium-binding domain. The 41-residue stretch at aspartate 401–valine 441 folds into the EGF-like 9; calcium-binding domain. N-linked (GlcNAc...) asparagine glycosylation is present at asparagine 657. Cysteine 807 and cysteine 833 form a disulfide bridge. Residues cysteine 807 to tyrosine 919 form the CUB domain. The interaction with the cholesterol-anchor of SHH stretch occupies residues isoleucine 845 to leucine 854. A disulfide bond links cysteine 860 and cysteine 881.

In terms of assembly, interacts with SHH via the cholesterol anchor of the dually lipid-modified SHH (ShhNp). Interacts with PTCH1. Forms homooligomers and heterooligomers with SCUBE1 and SCUBE3. Interacts with VEGFR2. In terms of processing, N-glycosylated. In terms of tissue distribution, expressed in adult heart, lung and testis.

It localises to the secreted. It is found in the cell surface. Functionally, lipid-binding protein required for SHH long-range signaling by binding to the dually lipid-modified SHH (ShhNp) and by promoting ShhNp mobilization, solubilization and release from the cell membrane. Acts by enhancing the proteolytic processing (shedding) of the lipid-modified N- and C- terminal of ShhNp at the cell surface. Synergizes with DISP1 to cause an increase in SHH secretion. Probable cell surface coreceptor for VEGFR2 involved in VEGFR2-mediated angiogenesis. In Mus musculus (Mouse), this protein is Signal peptide, CUB and EGF-like domain-containing protein 2.